Consider the following 264-residue polypeptide: MKAEATVIPSRCARGQTTAAPGVQPWQTSVPQNTTQPKLLAPRQHEKSQKRSSLLKELGAFHITIALLHLVFGGYLASTVKSLHLVVLKSWYPFWGAASFLISGILAITMKTFSKTYLKMLCLMTNLVSLFCVLSGLFVISKDLFLESPFESPIWRMYPNSTVHIQRLELALLCFTVLELFLPVPTAVTAWRDRPSAKNDDACLLPNTPSHLKGLPVEPPPSYQSVIQGDAQHKQHQRLREVKQVTPDTWIVTDGAGIWTQTAN.

The Cytoplasmic portion of the chain corresponds to 1–57 (MKAEATVIPSRCARGQTTAAPGVQPWQTSVPQNTTQPKLLAPRQHEKSQKRSSLLKE). Positions 17 to 37 (TTAAPGVQPWQTSVPQNTTQP) are enriched in polar residues. The interval 17-48 (TTAAPGVQPWQTSVPQNTTQPKLLAPRQHEKS) is disordered. The helical transmembrane segment at 58–78 (LGAFHITIALLHLVFGGYLAS) threads the bilayer. Topologically, residues 79–89 (TVKSLHLVVLK) are extracellular. Residues 90 to 110 (SWYPFWGAASFLISGILAITM) form a helical membrane-spanning segment. The Cytoplasmic portion of the chain corresponds to 111–119 (KTFSKTYLK). A helical transmembrane segment spans residues 120–140 (MLCLMTNLVSLFCVLSGLFVI). Residues 141–169 (SKDLFLESPFESPIWRMYPNSTVHIQRLE) are Extracellular-facing. A helical transmembrane segment spans residues 170 to 190 (LALLCFTVLELFLPVPTAVTA). Residues 191-264 (WRDRPSAKND…GAGIWTQTAN (74 aa)) are Cytoplasmic-facing.

It belongs to the MS4A family.

The protein localises to the membrane. In terms of biological role, may be involved in signal transduction as a component of a multimeric receptor complex. This chain is Membrane-spanning 4-domains subfamily A member 10 (MS4A10), found in Pongo abelii (Sumatran orangutan).